The chain runs to 425 residues: 5-methylthioadenosine/S-adenosylhomocysteine deaminase (425 aa).

Zn(2+) contacts are provided by His-63 and His-65. Substrate is bound by residues Glu-92 and His-184. His-211 contacts Zn(2+). 2 residues coordinate substrate: Glu-214 and Asp-299. A Zn(2+)-binding site is contributed by Asp-299.

It belongs to the metallo-dependent hydrolases superfamily. MTA/SAH deaminase family. Zn(2+) serves as cofactor.

It catalyses the reaction S-adenosyl-L-homocysteine + H2O + H(+) = S-inosyl-L-homocysteine + NH4(+). The enzyme catalyses S-methyl-5'-thioadenosine + H2O + H(+) = S-methyl-5'-thioinosine + NH4(+). Functionally, catalyzes the deamination of 5-methylthioadenosine and S-adenosyl-L-homocysteine into 5-methylthioinosine and S-inosyl-L-homocysteine, respectively. Is also able to deaminate adenosine. The polypeptide is 5-methylthioadenosine/S-adenosylhomocysteine deaminase (Pyrococcus abyssi (strain GE5 / Orsay)).